The sequence spans 233 residues: Sugar fermentation stimulation protein homolog (233 aa).

The protein belongs to the SfsA family.

This chain is Sugar fermentation stimulation protein homolog, found in Chelativorans sp. (strain BNC1).